A 459-amino-acid polypeptide reads, in one-letter code: Exodeoxyribonuclease 7 large subunit (459 aa).

It belongs to the XseA family. In terms of assembly, heterooligomer composed of large and small subunits.

The protein localises to the cytoplasm. The enzyme catalyses Exonucleolytic cleavage in either 5'- to 3'- or 3'- to 5'-direction to yield nucleoside 5'-phosphates.. Functionally, bidirectionally degrades single-stranded DNA into large acid-insoluble oligonucleotides, which are then degraded further into small acid-soluble oligonucleotides. The chain is Exodeoxyribonuclease 7 large subunit from Pseudomonas syringae pv. tomato (strain ATCC BAA-871 / DC3000).